The primary structure comprises 432 residues: uncharacterized protein (432 aa).

Position 243 is an N6-(pyridoxal phosphate)lysine (lysine 243).

This sequence belongs to the class-II pyridoxal-phosphate-dependent aminotransferase family. Pyridoxal 5'-phosphate is required as a cofactor.

Its subcellular location is the cytoplasm. This is an uncharacterized protein from Methanocaldococcus jannaschii (strain ATCC 43067 / DSM 2661 / JAL-1 / JCM 10045 / NBRC 100440) (Methanococcus jannaschii).